A 476-amino-acid chain; its full sequence is MADHSWDKTVEEAVNVLESRQILRSLRPICMSRQNEEEIVKSRANGGDGYEVFDGLCQWDRTSVEVSVSIPTFQKWLHDEPSNGEEIFSGDALAECRKGRFKKLLLFSGNDYLGLSSHPTISNAAANAVKEYGMGPKGSALICGYTTYHRLLESSLAQLKKKEDCLVCPTGFAANMAAMVAIGSVASLLAASGKPLKNEKVAIFSDALNHASIIDGVRLAERQGNVEVFVYRHCDMYHLNSLLSNCKMKRKVVVTDSLFSMDGDFAPMEELSQLRKKYGFLLVIDDAHGTFVCGENGGGVAEEFNCEADVDLCVGTLSKAAGCHGGFIACSKKWKQLIQSRGRSFIFSTAIPVPMAAAAYAAVVVARKEIWRRKAIWERVKEFKELSGVDISSPIISLVVGNQEKALKASRYLLKSGFHVMAIRPPTVPPNSCRLRVTLSAAHTTEDVKKLITALSSCLDFDNTATHIPSFLFPKL.

Arg24 provides a ligand contact to substrate. 171 to 172 (GF) is a binding site for pyridoxal 5'-phosphate. His210 contacts substrate. Pyridoxal 5'-phosphate is bound by residues Ser260, 285–288 (DDAH), and 316–319 (TLSK). Lys319 is subject to N6-(pyridoxal phosphate)lysine. Thr427 provides a ligand contact to substrate. Positions 474–476 (PKL) match the Peroxisomal targeting signal PTS1 motif.

The protein belongs to the class-II pyridoxal-phosphate-dependent aminotransferase family. BioF subfamily. In terms of assembly, monomer. Pyridoxal 5'-phosphate serves as cofactor.

The protein resides in the cytoplasm. The protein localises to the cytosol. It is found in the peroxisome. It carries out the reaction 6-carboxyhexanoyl-[ACP] + L-alanine + H(+) = (8S)-8-amino-7-oxononanoate + holo-[ACP] + CO2. It participates in cofactor biosynthesis; biotin biosynthesis; 8-amino-7-oxononanoate from pimeloyl-CoA: step 1/1. Its function is as follows. Catalyzes the decarboxylative condensation of pimeloyl-[acyl-carrier protein] and L-alanine to produce 8-amino-7-oxononanoate (AON), [acyl-carrier protein], and carbon dioxide. Required for the biosynthesis of D-biotin that prevents light-mediated cell death and modulates defense gene expression, probably by avoiding hydrogen peroxide H(2)O(2) accumulation. The sequence is that of 8-amino-7-oxononanoate synthase from Arabidopsis thaliana (Mouse-ear cress).